Here is a 509-residue protein sequence, read N- to C-terminus: Pyruvate kinase (509 aa).

A Phosphoserine modification is found at serine 29. Arginine 56 contacts substrate. 2 residues coordinate K(+): asparagine 58 and serine 60. 58–61 (NFSH) provides a ligand contact to ATP. Phosphoserine is present on serine 63. K(+) is bound by residues aspartate 91 and threonine 92. ATP is bound by residues arginine 98 and lysine 184. Glutamate 249 contributes to the Mg(2+) binding site. Glycine 272 and aspartate 273 together coordinate substrate. Aspartate 273 is a binding site for Mg(2+). At serine 281 the chain carries Phosphoserine. Residue threonine 305 coordinates substrate. Serine 412 is modified (phosphoserine).

The protein belongs to the pyruvate kinase family. As to quaternary structure, homotetramer. Mg(2+) is required as a cofactor. The cofactor is K(+).

The catalysed reaction is pyruvate + ATP = phosphoenolpyruvate + ADP + H(+). The protein operates within carbohydrate degradation; glycolysis; pyruvate from D-glyceraldehyde 3-phosphate: step 5/5. This Schizosaccharomyces pombe (strain 972 / ATCC 24843) (Fission yeast) protein is Pyruvate kinase (pyk1).